Reading from the N-terminus, the 338-residue chain is Formamidase (338 aa).

The CN hydrolase domain occupies 15–257; that stretch reads VVIGLAQLAL…DEIVCCELRP (243 aa). The active-site Proton acceptor is the E61. K130 (proton donor) is an active-site residue. C163 functions as the Nucleophile in the catalytic mechanism.

It belongs to the carbon-nitrogen hydrolase superfamily. Aliphatic amidase family.

It catalyses the reaction formamide + H2O = formate + NH4(+). Its function is as follows. Is an aliphatic amidase with a restricted substrate specificity, as it only hydrolyzes formamide. The chain is Formamidase from Pseudomonas syringae pv. tomato (strain ATCC BAA-871 / DC3000).